The primary structure comprises 243 residues: Proteasome subunit alpha (243 aa).

This sequence belongs to the peptidase T1A family. In terms of assembly, the 20S proteasome core is composed of 14 alpha and 14 beta subunits that assemble into four stacked heptameric rings, resulting in a barrel-shaped structure. The two inner rings, each composed of seven catalytic beta subunits, are sandwiched by two outer rings, each composed of seven alpha subunits. The catalytic chamber with the active sites is on the inside of the barrel. Has a gated structure, the ends of the cylinder being occluded by the N-termini of the alpha-subunits. Is capped at one or both ends by the proteasome regulatory ATPase, PAN.

It is found in the cytoplasm. Its activity is regulated as follows. The formation of the proteasomal ATPase PAN-20S proteasome complex, via the docking of the C-termini of PAN into the intersubunit pockets in the alpha-rings, triggers opening of the gate for substrate entry. Interconversion between the open-gate and close-gate conformations leads to a dynamic regulation of the 20S proteasome proteolysis activity. In terms of biological role, component of the proteasome core, a large protease complex with broad specificity involved in protein degradation. The sequence is that of Proteasome subunit alpha from Pyrobaculum aerophilum (strain ATCC 51768 / DSM 7523 / JCM 9630 / CIP 104966 / NBRC 100827 / IM2).